A 124-amino-acid polypeptide reads, in one-letter code: Small ribosomal subunit protein uS12 (124 aa).

Asp89 carries the post-translational modification 3-methylthioaspartic acid.

Belongs to the universal ribosomal protein uS12 family. As to quaternary structure, part of the 30S ribosomal subunit. Contacts proteins S8 and S17. May interact with IF1 in the 30S initiation complex.

With S4 and S5 plays an important role in translational accuracy. In terms of biological role, interacts with and stabilizes bases of the 16S rRNA that are involved in tRNA selection in the A site and with the mRNA backbone. Located at the interface of the 30S and 50S subunits, it traverses the body of the 30S subunit contacting proteins on the other side and probably holding the rRNA structure together. The combined cluster of proteins S8, S12 and S17 appears to hold together the shoulder and platform of the 30S subunit. The sequence is that of Small ribosomal subunit protein uS12 from Tolumonas auensis (strain DSM 9187 / NBRC 110442 / TA 4).